The sequence spans 295 residues: 2-methylisocitrate lyase (295 aa).

45–47 is a binding site for substrate; sequence SGG. Mg(2+) is bound by residues Asp-85 and Asp-87. Substrate is bound by residues 123-124, Arg-158, Glu-188, 210-212, Arg-241, and Arg-270; these read CG and NIT.

This sequence belongs to the isocitrate lyase/PEP mutase superfamily. Methylisocitrate lyase family. As to quaternary structure, homotetramer; dimer of dimers. It depends on Mg(2+) as a cofactor.

The enzyme catalyses (2S,3R)-3-hydroxybutane-1,2,3-tricarboxylate = pyruvate + succinate. It participates in organic acid metabolism; propanoate degradation. Its function is as follows. Involved in the catabolism of short chain fatty acids (SCFA) via the 2-methylcitrate cycle I (propionate degradation route). Catalyzes the thermodynamically favored C-C bond cleavage of (2R,3S)-2-methylisocitrate to yield pyruvate and succinate via an alpha-carboxy-carbanion intermediate. The chain is 2-methylisocitrate lyase from Salmonella typhimurium (strain LT2 / SGSC1412 / ATCC 700720).